We begin with the raw amino-acid sequence, 488 residues long: Integrin beta-like protein 1 (488 aa).

Residues 1-21 (MHAGAFINFVWALSLVSLLAA) form the signal peptide. Cystine bridges form between cysteine 38-cysteine 65, cysteine 49-cysteine 63, cysteine 57-cysteine 68, cysteine 70-cysteine 83, cysteine 85-cysteine 106, cysteine 90-cysteine 104, cysteine 98-cysteine 109, cysteine 111-cysteine 120, cysteine 126-cysteine 153, cysteine 137-cysteine 151, cysteine 145-cysteine 156, cysteine 158-cysteine 172, cysteine 174-cysteine 196, cysteine 179-cysteine 194, cysteine 188-cysteine 199, cysteine 201-cysteine 210, cysteine 214-cysteine 241, cysteine 225-cysteine 239, cysteine 233-cysteine 244, cysteine 246-cysteine 263, cysteine 265-cysteine 290, cysteine 270-cysteine 288, cysteine 282-cysteine 293, cysteine 295-cysteine 304, cysteine 310-cysteine 337, cysteine 321-cysteine 335, cysteine 329-cysteine 340, cysteine 342-cysteine 355, cysteine 357-cysteine 378, cysteine 362-cysteine 376, cysteine 370-cysteine 381, cysteine 383-cysteine 392, cysteine 398-cysteine 425, cysteine 409-cysteine 423, cysteine 417-cysteine 428, cysteine 430-cysteine 442, cysteine 444-cysteine 465, cysteine 449-cysteine 463, cysteine 457-cysteine 468, and cysteine 470-cysteine 479. 10 consecutive I-EGF domains span residues 38 to 84 (CRLP…PLCE), 85 to 121 (CHDW…EACQ), 126 to 173 (CDLT…KYCE), 174 to 211 (CDDT…DKCE), 214 to 264 (CDIT…DTCE), 265 to 305 (CDER…RKCE), 310 to 356 (CALS…KNCE), 357 to 393 (CDDR…KLCQ), 398 to 443 (CNMT…EFCE), and 444 to 480 (CDDR…NACE). The stretch at 49-89 (CRTPDGSICSGRGSCDCGICLCEVKEAGKYYGPLCECHDWV) is one I repeat. Positions 49 to 488 (CRTPDGSICS…CEIWLGSEYP (440 aa)) are cysteine-rich tandem repeats. An II repeat occupies 90-136 (CHTYDGQVCAGHGQCDCGVCKCDVGWSGEACQYPTTCDLTRKKSNEM). The III repeat unit spans residues 137–178 (CKNSQAVICSNAGTCQCGRCKCENSDNSGLIYGKYCECDDTE). One copy of the IV repeat lies at 179 to 224 (CFDDETQEICGGHGKCYCGNCYCEAGWHGDKCEFQCDITPWEIKKR). The stretch at 225-269 (CTSPDGKICSNRGTCVCGECTCHDVDPTGDWGDIHGDTCECDERN) is one V repeat. A VI repeat occupies 270–320 (CKSVYDRYSDDFCSGHGQCNCGRCDCKDGWTGRKCEHPRACALSIEESKKK). Residues 321-361 (CQGSASQPCSGRGKCECGQCTCFPPGDSKVYGKNCECDDRQ) form a VII repeat. The stretch at 362–408 (CEDLEGKICGEHGTCSCGRCICEAGWFGKLCQHERKCNMTEEESKSQ) is one VIII repeat. An N-linked (GlcNAc...) asparagine glycan is attached at asparagine 399. One copy of the IX repeat lies at 409–448 (CESDDGILCSGKGSCHCGKCICSPQEWYVSGEFCECDDRD). The X repeat unit spans residues 449 to 488 (CDKHDGLICTGNGICNCGNCECWEGWNGNACEIWLGSEYP).

It localises to the secreted. The chain is Integrin beta-like protein 1 (itgbl1) from Xenopus laevis (African clawed frog).